The following is a 319-amino-acid chain: Ninja-family protein AFP4 (319 aa).

Residues 39–54 (DSEHGENQQEAKKRED) show a composition bias toward basic and acidic residues. 3 disordered regions span residues 39 to 63 (DSEH…EKDV), 99 to 120 (FVFD…IVGR), and 205 to 228 (VTGP…NVEN).

It belongs to the Ninja family. In terms of assembly, interacts with ABI5/DPBF1, AREB3/DPBF3, EEL/DPBF4, ABF1 and ABF3/DPBF5. In terms of tissue distribution, predominantly expressed in roots and seedlings.

It is found in the nucleus. Acts as a negative regulator of abscisic acid (ABA) and salinity responses. This chain is Ninja-family protein AFP4 (AFP4), found in Arabidopsis thaliana (Mouse-ear cress).